Reading from the N-terminus, the 311-residue chain is Olfactory receptor 1L4 (311 aa).

Residues 1-26 (METKNYSSSTSGFILLGLSSNPKLQK) lie on the Extracellular side of the membrane. Residue Asn5 is glycosylated (N-linked (GlcNAc...) asparagine). The helical transmembrane segment at 27 to 50 (PLFAIFLIMYLLTAVGNVLIILAI) threads the bilayer. The Cytoplasmic portion of the chain corresponds to 51–58 (YSDPRLHT). The chain crosses the membrane as a helical span at residues 59–80 (PMYFFLSNLSFMDICFTTVIVP). The Extracellular segment spans residues 81-101 (KMLVNFLSETKIISYVGCLIQ). An intrachain disulfide couples Cys98 to Cys190. Residues 102–121 (MYFFMAFGNTDSYLLASMAI) traverse the membrane as a helical segment. At 122–140 (DRLVAICNPLHYDVVMKPW) the chain is on the cytoplasmic side. Residues 141 to 159 (HCLLMLLGSCSISHLHSLF) form a helical membrane-spanning segment. Over 160-197 (RVLLMSRLSFCASHIIKHFFCDTQPVLKLSCSDTSSSQ) the chain is Extracellular. The chain crosses the membrane as a helical span at residues 198–220 (MVVMTETLAVIVTPFLCTIFSYL). The Cytoplasmic segment spans residues 221-237 (QIIVTVLRIPSAAGKWK). A helical membrane pass occupies residues 238–260 (AFSTCGSHLTVVVLFYGSVIYVY). At 261–273 (FRPLSMYSVMKGR) the chain is on the extracellular side. Residues 274-293 (VATVMYTVVTPMLNPFIYSL) form a helical membrane-spanning segment. Topologically, residues 294–311 (RNKDMKRGLKKLRHRIYS) are cytoplasmic.

This sequence belongs to the G-protein coupled receptor 1 family.

It is found in the cell membrane. Functionally, odorant receptor. The sequence is that of Olfactory receptor 1L4 (OR1L4) from Homo sapiens (Human).